Consider the following 339-residue polypeptide: DNA-directed RNA polymerase subunit alpha (339 aa).

Residues Met1–Glu233 are alpha N-terminal domain (alpha-NTD). The alpha C-terminal domain (alpha-CTD) stretch occupies residues Gly266–Leu339.

This sequence belongs to the RNA polymerase alpha chain family. As to quaternary structure, in plastids the minimal PEP RNA polymerase catalytic core is composed of four subunits: alpha, beta, beta', and beta''. When a (nuclear-encoded) sigma factor is associated with the core the holoenzyme is formed, which can initiate transcription.

It is found in the plastid. The protein resides in the chloroplast. It catalyses the reaction RNA(n) + a ribonucleoside 5'-triphosphate = RNA(n+1) + diphosphate. DNA-dependent RNA polymerase catalyzes the transcription of DNA into RNA using the four ribonucleoside triphosphates as substrates. This Sorghum bicolor (Sorghum) protein is DNA-directed RNA polymerase subunit alpha.